A 349-amino-acid chain; its full sequence is C-X-C chemokine receptor type 1 (349 aa).

The Extracellular segment spans residues 1-44; that stretch reads MAEAEYFIWIAPEGDFEEEFGNITRMLPTGEYFSPCKRVPMTNR. Asparagine 22 carries N-linked (GlcNAc...) asparagine glycosylation. Residues 45-71 traverse the membrane as a helical segment; the sequence is QAVVVFYALVFLLSLLGNSLVMLVILY. The Cytoplasmic segment spans residues 72-80; the sequence is RRRTRSVTD. The helical transmembrane segment at 81-101 threads the bilayer; it reads VYVLNLAIADLLFSLTLPFLA. The Extracellular portion of the chain corresponds to 102–116; that stretch reads VSKWKGWIFGTPLCK. Residues cysteine 115 and cysteine 192 are joined by a disulfide bond. The chain crosses the membrane as a helical span at residues 117–138; the sequence is MVSLLKEVNFFSGILLLACISV. Residues 139 to 159 lie on the Cytoplasmic side of the membrane; the sequence is DRYLAIVHATRTLTRKRYLVK. Residues 160 to 179 form a helical membrane-spanning segment; the sequence is FVCMGTWGLSLVLSLPFAIF. Residues 180 to 204 are Extracellular-facing; it reads RQAYKPYRSGTVCYEVLGEATADLR. Residues 205 to 225 form a helical membrane-spanning segment; that stretch reads ITLRGLSHIFGFLLPLFIMLV. The Cytoplasmic portion of the chain corresponds to 226–247; the sequence is CYGLTLRTLFKAHMRQKRRAMW. Residues 248–269 traverse the membrane as a helical segment; sequence VIFAVVLVFLLCCLPYNLVLLS. The Extracellular portion of the chain corresponds to 270–290; sequence DTLLGAHLIQDTCERRNNIDQ. Residues 291-313 form a helical membrane-spanning segment; that stretch reads ALYITEILGFSHSCLNPVIYAFV. The Cytoplasmic segment spans residues 314 to 349; it reads GQSFRHEFLKILANLVHKEVLTHHSASFRTSLTTIY.

It belongs to the G-protein coupled receptor 1 family. Interacts with IL8. Interacts with GNAI2.

Its subcellular location is the cell membrane. Receptor to interleukin-8, which is a powerful neutrophils chemotactic factor. Binding of IL-8 to the receptor causes activation of neutrophils. This response is mediated via a G-protein that activates a phosphatidylinositol-calcium second messenger system. The polypeptide is C-X-C chemokine receptor type 1 (Cxcr1) (Rattus norvegicus (Rat)).